A 517-amino-acid polypeptide reads, in one-letter code: Protein translocase subunit SecD (517 aa).

Transmembrane regions (helical) follow at residues 5-25, 357-377, 380-400, 407-427, 455-475, and 479-499; these read LRWITILIVFVVSLFFMFPLD, IWAGIIGVAAVIIFMLIYYKF, FIASIALLSNAIIILGAMGMF, PGIAGLILTMGMAIDANVLIF, IIDSNITTLIAGLVLFQFGTG, and GFAVTLTIGILSSIFTAVTLS.

The protein belongs to the SecD/SecF family. SecD subfamily. Forms a complex with SecF. Part of the essential Sec protein translocation apparatus which comprises SecA, SecYEG and auxiliary proteins SecDF. Other proteins may also be involved.

The protein resides in the cell inner membrane. Its function is as follows. Part of the Sec protein translocase complex. Interacts with the SecYEG preprotein conducting channel. SecDF uses the proton motive force (PMF) to complete protein translocation after the ATP-dependent function of SecA. The sequence is that of Protein translocase subunit SecD from Calditerrivibrio nitroreducens (strain DSM 19672 / NBRC 101217 / Yu37-1).